The following is a 220-amino-acid chain: Deoxyribose-phosphate aldolase (220 aa).

Asp-92 acts as the Proton donor/acceptor in catalysis. Catalysis depends on Lys-157, which acts as the Schiff-base intermediate with acetaldehyde. Catalysis depends on Lys-186, which acts as the Proton donor/acceptor.

The protein belongs to the DeoC/FbaB aldolase family. DeoC type 1 subfamily.

The protein resides in the cytoplasm. The catalysed reaction is 2-deoxy-D-ribose 5-phosphate = D-glyceraldehyde 3-phosphate + acetaldehyde. Its pathway is carbohydrate degradation; 2-deoxy-D-ribose 1-phosphate degradation; D-glyceraldehyde 3-phosphate and acetaldehyde from 2-deoxy-alpha-D-ribose 1-phosphate: step 2/2. Functionally, catalyzes a reversible aldol reaction between acetaldehyde and D-glyceraldehyde 3-phosphate to generate 2-deoxy-D-ribose 5-phosphate. This Caldicellulosiruptor saccharolyticus (strain ATCC 43494 / DSM 8903 / Tp8T 6331) protein is Deoxyribose-phosphate aldolase.